Reading from the N-terminus, the 533-residue chain is Flavin-dependent halogenase gsfI (533 aa).

FAD-binding residues include Gly-14, Gly-17, and Glu-47. Residues Ser-331 and Gly-332 each coordinate chloride.

The protein belongs to the flavin-dependent halogenase family.

It carries out the reaction griseophenone C + FADH2 + chloride + O2 = griseophenone B + FAD + 2 H2O + H(+). Its pathway is secondary metabolite biosynthesis; terpenoid biosynthesis. Flavin-dependent halogenase; part of the gene cluster that mediates the biosynthesis of griseofulvin, an important antifungal drug that has been in use for a long time for treating dermatophyte infections. The first step of the pathway is the formation of the heptaketide backbone by gsfA which is initiated by priming with acetyl-CoA, followed by sequential condensations of 6 malonyl-CoA units. The resulting benzophenone can undergo a spontaneous dehydration to form norlichexanthone. However, the true precursor for the griseofulvin biosynthesis is not norlichexanthone, but the heptaketide benzophenone that is O-methylated at 3-OH by gsfB to produce griseophenone D which is further methylated at 9-OH by gsfC to yield griseophenone C. Griseophenone C is then substrate of halogenase gsfI which is responsible for the regio-specific chlorination at the C13 position to form griseophenone B. The cytochrome P450 gsfF catalyzes the coupling of orcinol and phloroglucinol rings in griseophenone B to form desmethyl-dehydrogriseofulvin A which is further methylated at 5-OH by gsfD to yield dehydrogriseofulvin. Finally, gsfE performs stereospecific reduction of enone 18 of dehydrogriseofulvin to afford the final product griseofulvin. This is Flavin-dependent halogenase gsfI from Penicillium aethiopicum.